We begin with the raw amino-acid sequence, 269 residues long: Aquaporin-7 (269 aa).

The Cytoplasmic portion of the chain corresponds to 1–20; that stretch reads MAGSVLENIQSVLQKTWVRE. Residue Ser-4 is modified to Phosphoserine. The helical transmembrane segment at 21 to 38 threads the bilayer; that stretch reads FLAEFLSTYVLMVFGLGS. Residues 39–51 lie on the Extracellular side of the membrane; sequence VAHMVLGERLGSY. Residues 52 to 69 traverse the membrane as a helical segment; it reads LGVNLGFGFGVTMGIHVA. Over 70-73 the chain is Cytoplasmic; sequence GGIS. An intramembrane region (discontinuously helical) is located at residues 74–87; that stretch reads GAHMNAAVTFTNCA. Residues 78-80 carry the NPA 1 motif; the sequence is NAA. Topologically, residues 88–95 are cytoplasmic; it reads LGRMAWKK. Residues 96–116 traverse the membrane as a helical segment; it reads FPIYVLGQFLGSFLAAATTYL. Residues 117–151 are Extracellular-facing; the sequence is IFYGAINHYAGGELLVTGPKSTANIFATYLPEHMT. A helical transmembrane segment spans residues 152–172; it reads LWRGFVDEVFVTGMLQLCIFA. The Cytoplasmic segment spans residues 173–184; that stretch reads ITDKLNSPALQG. The chain crosses the membrane as a helical span at residues 185–201; the sequence is TEPLMIGILVCVLGVSL. The Extracellular portion of the chain corresponds to 202-205; that stretch reads GMNT. The segment at residues 206–219 is an intramembrane region (discontinuously helical); it reads GYAINPSRDLPPRF. The short motif at 210 to 212 is the NPA 2 element; the sequence is NPS. Over 220–237 the chain is Extracellular; that stretch reads FTFIAGWGKKVFSAGNNW. Residues 238-259 traverse the membrane as a helical segment; it reads WWVPVVAPLLGAYLGGIVYLGL. Residues 260 to 269 are Cytoplasmic-facing; sequence IHAGIPPQGS.

The protein belongs to the MIP/aquaporin (TC 1.A.8) family. As to quaternary structure, homotetramer; each monomer provides an independent glycerol/water pore. Two homotetramers on opposing membranes can dimerize, forming a cell-cell junction. Interacts with PLIN1. Phosphorylation by PKA could prevent the interaction with PLIN1. Detected in heart, kidney and testis.

It localises to the cell membrane. The protein localises to the cytoplasmic vesicle membrane. The protein resides in the lipid droplet. The enzyme catalyses glycerol(in) = glycerol(out). The catalysed reaction is H2O(in) = H2O(out). It catalyses the reaction urea(in) = urea(out). Glycerol transport is regulated by pH, with the porin being permeable to glycerol at pH 7.4 but not at pH 5.5. Water permeability, however, is not influenced by pH. Not inhibited by mercury ions. In terms of biological role, aquaglyceroporins form homotetrameric transmembrane channels, with each monomer independently mediating glycerol and water transport across the plasma membrane along their osmotic gradient. Could also be permeable to urea. Mediates the efflux of glycerol, formed upon triglyceride hydrolysis, to avoid its accumulation in adipocytes and to make it available to other tissues. In the kidney, mediates the reabsorption of glycerol, preventing its loss in urine, again participating to energy homeostasis. In pancreatic beta cells, it also mediates the efflux of glycerol, regulating its intracellular levels. This Rattus norvegicus (Rat) protein is Aquaporin-7.